We begin with the raw amino-acid sequence, 341 residues long: Phosphate acyltransferase (341 aa).

It belongs to the PlsX family. As to quaternary structure, homodimer. Probably interacts with PlsY.

The protein localises to the cytoplasm. It catalyses the reaction a fatty acyl-[ACP] + phosphate = an acyl phosphate + holo-[ACP]. It functions in the pathway lipid metabolism; phospholipid metabolism. Catalyzes the reversible formation of acyl-phosphate (acyl-PO(4)) from acyl-[acyl-carrier-protein] (acyl-ACP). This enzyme utilizes acyl-ACP as fatty acyl donor, but not acyl-CoA. The chain is Phosphate acyltransferase from Chlorobaculum parvum (strain DSM 263 / NCIMB 8327) (Chlorobium vibrioforme subsp. thiosulfatophilum).